A 735-amino-acid polypeptide reads, in one-letter code: Ion-translocating oxidoreductase complex subunit C (735 aa).

4Fe-4S ferredoxin-type domains lie at 368 to 397 and 407 to 436; these read MGAP…QQLY and KATA…VQYF. Cys377, Cys380, Cys383, Cys387, Cys416, Cys419, Cys422, and Cys426 together coordinate [4Fe-4S] cluster. The interval 534-716 is disordered; it reads QARAKQAAHP…ADPRKAAVAA (183 aa).

The protein belongs to the 4Fe4S bacterial-type ferredoxin family. RnfC subfamily. The complex is composed of six subunits: RsxA, RsxB, RsxC, RsxD, RsxE and RsxG. It depends on [4Fe-4S] cluster as a cofactor.

It localises to the cell inner membrane. In terms of biological role, part of a membrane-bound complex that couples electron transfer with translocation of ions across the membrane. Required to maintain the reduced state of SoxR. This chain is Ion-translocating oxidoreductase complex subunit C, found in Salmonella agona (strain SL483).